The primary structure comprises 547 residues: Glucose-6-phosphate isomerase (547 aa).

E351 (proton donor) is an active-site residue. Residues H382 and K509 contribute to the active site.

This sequence belongs to the GPI family.

The protein resides in the cytoplasm. It carries out the reaction alpha-D-glucose 6-phosphate = beta-D-fructose 6-phosphate. The protein operates within carbohydrate biosynthesis; gluconeogenesis. It participates in carbohydrate degradation; glycolysis; D-glyceraldehyde 3-phosphate and glycerone phosphate from D-glucose: step 2/4. Catalyzes the reversible isomerization of glucose-6-phosphate to fructose-6-phosphate. In Coxiella burnetii (strain CbuG_Q212) (Coxiella burnetii (strain Q212)), this protein is Glucose-6-phosphate isomerase.